We begin with the raw amino-acid sequence, 69 residues long: Cell division protein CrgA (69 aa).

2 helical membrane-spanning segments follow: residues 14–34 (VWFP…MVLF) and 45–65 (AVGT…FAMM).

Belongs to the CrgA family.

The protein resides in the cell membrane. Its function is as follows. Involved in cell division. The sequence is that of Cell division protein CrgA from Tropheryma whipplei (strain TW08/27) (Whipple's bacillus).